Consider the following 229-residue polypeptide: UPF0758 protein Cagg_0777 (229 aa).

In terms of domain architecture, MPN spans 105–227 (PIRSPGDVAA…YVSLRERGIG (123 aa)). The Zn(2+) site is built by H176, H178, and D189. Residues 176–189 (HNHPSGEATPSPED) carry the JAMM motif motif.

It belongs to the UPF0758 family.

The protein is UPF0758 protein Cagg_0777 of Chloroflexus aggregans (strain MD-66 / DSM 9485).